The primary structure comprises 252 residues: Large ribosomal subunit protein uL4 (252 aa).

The protein belongs to the universal ribosomal protein uL4 family. As to quaternary structure, part of the 50S ribosomal subunit.

One of the primary rRNA binding proteins, this protein initially binds near the 5'-end of the 23S rRNA. It is important during the early stages of 50S assembly. It makes multiple contacts with different domains of the 23S rRNA in the assembled 50S subunit and ribosome. Its function is as follows. Forms part of the polypeptide exit tunnel. This Methanococcus maripaludis (strain C7 / ATCC BAA-1331) protein is Large ribosomal subunit protein uL4.